Here is an 83-residue protein sequence, read N- to C-terminus: Neurotoxin-1'' (83 aa).

The N-terminal stretch at 1-19 (MNYLVMISLALLLMIGVES) is a signal peptide. The region spanning 21–82 (RDGYIVYPNN…PIKDTSRKCT (62 aa)) is the LCN-type CS-alpha/beta domain. 4 disulfides stabilise this stretch: Cys31–Cys81, Cys35–Cys53, Cys39–Cys63, and Cys43–Cys65. A propeptide (removed by a carboxypeptidase (in neurotoxin-1/1')) is located at residue Arg83.

Belongs to the long (4 C-C) scorpion toxin superfamily. Sodium channel inhibitor family. Alpha subfamily. As to expression, expressed by the venom gland.

The protein localises to the secreted. Its function is as follows. Alpha toxins bind voltage-independently at site-3 of sodium channels (Nav) and inhibit the inactivation of the activated channels, thereby blocking neuronal transmission. Is active against mammals and binds with high affinity rat brain synaptosomes. The chain is Neurotoxin-1'' from Androctonus australis (Sahara scorpion).